Consider the following 164-residue polypeptide: Phosphopantetheine adenylyltransferase (164 aa).

This sequence belongs to the eukaryotic CoaD family.

The protein localises to the cytoplasm. It carries out the reaction (R)-4'-phosphopantetheine + ATP + H(+) = 3'-dephospho-CoA + diphosphate. Its pathway is cofactor biosynthesis; coenzyme A biosynthesis. Its function is as follows. Reversibly transfers an adenylyl group from ATP to 4'-phosphopantetheine, yielding dephospho-CoA (dPCoA) and pyrophosphate. The polypeptide is Phosphopantetheine adenylyltransferase (Methanothermobacter thermautotrophicus (strain ATCC 29096 / DSM 1053 / JCM 10044 / NBRC 100330 / Delta H) (Methanobacterium thermoautotrophicum)).